The sequence spans 461 residues: UPF0210 protein LCABL_10110 (461 aa).

The protein belongs to the UPF0210 family. Homodimer.

This chain is UPF0210 protein LCABL_10110, found in Lacticaseibacillus casei (strain BL23) (Lactobacillus casei).